A 225-amino-acid polypeptide reads, in one-letter code: Acidic leucine-rich nuclear phosphoprotein 32-related protein 2 (225 aa).

LRR repeat units follow at residues 39–60 (KLEL…PVLP), 61–82 (ALNY…DVLI), and 87–107 (EIKK…RTLK). Residues 121–161 (SSLGLLDDYRVKMFEMIPSLKILDGCDVDGEEVEEEFAAGE) enclose the LRRCT domain. Over residues 155 to 175 (EEFAAGEGAEDSDEGDSDEDG) the composition is skewed to acidic residues. Residues 155–225 (EEFAAGEGAE…DEPEAKKSAE (71 aa)) form a disordered region.

This sequence belongs to the ANP32 family.

The chain is Acidic leucine-rich nuclear phosphoprotein 32-related protein 2 from Caenorhabditis elegans.